A 303-amino-acid polypeptide reads, in one-letter code: Crk-like protein (303 aa).

An SH2 domain is found at 14–102 (WYMGPVSRQE…LDTTTLIEPA (89 aa)). The SH3 1 domain maps to 123-183 (ENLEYVRTLY…PVPYVEKLVR (61 aa)). Residue Y127 is modified to Phosphotyrosine. The disordered stretch occupies residues 184 to 204 (SSPHGKHGNRNSNSYGIPEPA). Phosphotyrosine is present on Y207. The SH3 2 domain maps to 235–296 (NGPVFAKAIQ…PFTHVKIFDP (62 aa)).

This sequence belongs to the CRK family. As to quaternary structure, interacts with INPP5D/SHIP1. Interacts with DOCK2 and EPOR. Interacts with phosphorylated CBLB and IRS4. Interacts with BCAR1/CAS and NEDD9/HEF1.

In terms of biological role, may mediate the transduction of intracellular signals. This chain is Crk-like protein, found in Rattus norvegicus (Rat).